A 464-amino-acid chain; its full sequence is Serine/threonine-protein kinase 38-like (464 aa).

Ala2 is modified (N-acetylalanine). The S100B binding stretch occupies residues Lys64–Asp89. Thr75 carries the post-translational modification Phosphothreonine. The region spanning Phe90–Phe383 is the Protein kinase domain. ATP is bound by residues Ile96–Val104 and Lys119. The active-site Proton acceptor is the Asp213. Residue Ser282 is modified to Phosphoserine; by autocatalysis. The AGC-kinase C-terminal domain maps to Glu384–Gly453. Thr442 is modified (phosphothreonine; by STK24/MST3).

Belongs to the protein kinase superfamily. AGC Ser/Thr protein kinase family. As to quaternary structure, homodimeric S100B binds two molecules of STK38L. Interacts with MOB1 and MOB2. Interacts with MICAL1; leading to inhibit the protein kinase activity by antagonizing activation by MST1/STK4. Mg(2+) serves as cofactor. As to expression, highly expressed in the large and small intestine, stomach and testis. High levels also present in the brain, in particular the neurocortex, basal forebrain, hippocampus, the amygdala, cerebellum and brainstem.

The protein localises to the cytoplasm. The protein resides in the cytoskeleton. Its subcellular location is the membrane. The enzyme catalyses L-seryl-[protein] + ATP = O-phospho-L-seryl-[protein] + ADP + H(+). It carries out the reaction L-threonyl-[protein] + ATP = O-phospho-L-threonyl-[protein] + ADP + H(+). Activated by binding of S100B which releases autoinhibitory N-lobe interactions, enabling ATP to bind and the autophosphorylation of Ser-282. Thr-442 then undergoes calcium-dependent phosphorylation by STK24/MST3. Interactions between phosphorylated Thr-442 and the N-lobe promote additional structural changes that complete the activation of the kinase. Autoinhibition is also released by the binding of MOB1/MOBKL1A and MOB2 to the N-terminal of STK38L. In terms of biological role, involved in the regulation of structural processes in differentiating and mature neuronal cells. The chain is Serine/threonine-protein kinase 38-like from Mus musculus (Mouse).